The primary structure comprises 428 residues: Magnesium transporter MRS2-C (428 aa).

A run of 2 helical transmembrane segments spans residues 364 to 384 (LLLTTATFVVAIFGVVSGVFG) and 400 to 420 (WTLVITGVCGLVIFCCFIWYF). Residues 384–386 (GMN) carry the Required for magnesium transport activity motif.

The protein belongs to the CorA metal ion transporter (MIT) (TC 1.A.35.5) family.

The protein resides in the membrane. Its function is as follows. Magnesium transporter that may mediate the influx of magnesium. This chain is Magnesium transporter MRS2-C, found in Oryza sativa subsp. indica (Rice).